Here is a 638-residue protein sequence, read N- to C-terminus: Guanylate-binding protein 7 (638 aa).

The interval 1–310 (MASGPNMEAP…DAINSGDVPC (310 aa)) is GTPase domain (Globular). Residues 35 to 277 (TQPVVVVAIV…FCSYIFSNSK (243 aa)) form the GB1/RHD3-type G domain. GTP contacts are provided by residues 45-52 (GLYRTGKS), 67-69 (LGT), and 97-101 (DTEGL). Residues 311-638 (LENAVTTLAQ…TQNSDKVRKL (328 aa)) are interaction with the CYBA-CYBB complex. Positions 590–638 (SSLGAKILDGFGDVLISVVPGSGKYFGLGLKILSSQMNQTQNSDKVRKL) are C-terminal tail; required for its localization to cytoplasmic vesicle.

The protein belongs to the TRAFAC class dynamin-like GTPase superfamily. GB1/RHD3 GTPase family. GB1 subfamily. In terms of assembly, monomer and dimer. Interacts with CYBA, CYBA-CYBB complex and ATG4B. Interacts (via GB1/RHD3-type G domain) with NCF2 and NCF2-NCF4 complex.

It localises to the cytoplasmic vesicle membrane. It catalyses the reaction GTP + H2O = GDP + phosphate + H(+). The enzyme catalyses GDP + H2O = GMP + phosphate + H(+). With respect to regulation, inhibited by orthovanadate, berylium fluoride and aluminum flouride. Functionally, interferon (IFN)-inducible GTPase that plays important roles in innate immunity against a diverse range of bacterial, viral and protozoan pathogens. Hydrolyzes GTP to GMP in two consecutive cleavage reactions and predominantly uses GTP and not GDP or GMP as the substrate. Following infection, recruited to the pathogen-containing vacuoles or vacuole-escaped bacteria and acts as a positive regulator of inflammasome assembly by promoting the release of inflammasome ligands from bacteria. Acts by promoting lysis of pathogen-containing vacuoles, releasing pathogens into the cytosol. Following pathogen release in the cytosol, promotes recruitment of proteins that mediate bacterial cytolysis, such as Gm12250/Irgb10: this liberates ligands that are detected by inflammasomes, such as lipopolysaccharide (LPS) that activates the non-canonical CASP4/CASP11 inflammasome or double-stranded DNA (dsDNA) that activates the AIM2 inflammasome. Also promotes IFN-gamma-mediated host defense against bacterial infections by regulating oxidative responses and bacteriolytic peptide generation. May help to assemble NADPH oxidase on phagosomal membranes by acting as a bridging protein between NADPH oxidase cytosolic subunits NCF2-NCF4 and the membrane subunits CYBA-CYBB. Participates along with GBP1 in trafficking monoubiquinated protein cargo to autolysosomes for generating ubiquitin-derived antimicrobial peptides. Facilitates influenza A virus replication by inhibiting the activation of NF-kappaB and JAK-STAT signaling pathways and the expression of type I, type III interferons and pro-inflammatory cytokines. Confers protection to several pathogens, including the bacterial pathogens Listeria monocytogenes and Mycobacterium bovis BCG as well as the protozoan pathogen Toxoplasma gondii. Required for disruption of the parasitophorous vacuole formed following T.gondii infection and subsequent killing of the parasite. The chain is Guanylate-binding protein 7 (Gbp7) from Mus musculus (Mouse).